The following is a 347-amino-acid chain: DNA-directed RNA polymerase subunit alpha (347 aa).

Residues 1–243 are alpha N-terminal domain (alpha-NTD); the sequence is MLIKQGERLI…DQISVFINFD (243 aa). The alpha C-terminal domain (alpha-CTD) stretch occupies residues 260–347; it reads VNEHLFKSID…EWKRKQQNEA (88 aa).

This sequence belongs to the RNA polymerase alpha chain family. Homodimer. The RNAP catalytic core consists of 2 alpha, 1 beta, 1 beta' and 1 omega subunit. When a sigma factor is associated with the core the holoenzyme is formed, which can initiate transcription.

It carries out the reaction RNA(n) + a ribonucleoside 5'-triphosphate = RNA(n+1) + diphosphate. DNA-dependent RNA polymerase catalyzes the transcription of DNA into RNA using the four ribonucleoside triphosphates as substrates. The sequence is that of DNA-directed RNA polymerase subunit alpha from Desulfovibrio desulfuricans (strain ATCC 27774 / DSM 6949 / MB).